An 86-amino-acid chain; its full sequence is MSKGHSLQDPYLNTLRKEKVGVSIYLVNGIKLQGTIESFDQFVILLKNTVSQMVYKHAISTVVPVRPIRLPSASESEQGDAEPGNA.

The region spanning 9 to 68 is the Sm domain; it reads DPYLNTLRKEKVGVSIYLVNGIKLQGTIESFDQFVILLKNTVSQMVYKHAISTVVPVRPI.

It belongs to the Hfq family. Homohexamer.

RNA chaperone that binds small regulatory RNA (sRNAs) and mRNAs to facilitate mRNA translational regulation in response to envelope stress, environmental stress and changes in metabolite concentrations. Also binds with high specificity to tRNAs. This is RNA-binding protein Hfq from Pseudomonas fluorescens (strain ATCC BAA-477 / NRRL B-23932 / Pf-5).